Reading from the N-terminus, the 308-residue chain is Lipoyl synthase 2 (308 aa).

The [4Fe-4S] cluster site is built by cysteine 49, cysteine 54, cysteine 60, cysteine 75, cysteine 79, cysteine 82, and serine 300. In terms of domain architecture, Radical SAM core spans 61 to 289 (YASGTATFLL…KRIAEGLGFK (229 aa)).

It belongs to the radical SAM superfamily. Lipoyl synthase family. The cofactor is [4Fe-4S] cluster.

The protein localises to the cytoplasm. The catalysed reaction is [[Fe-S] cluster scaffold protein carrying a second [4Fe-4S](2+) cluster] + N(6)-octanoyl-L-lysyl-[protein] + 2 oxidized [2Fe-2S]-[ferredoxin] + 2 S-adenosyl-L-methionine + 4 H(+) = [[Fe-S] cluster scaffold protein] + N(6)-[(R)-dihydrolipoyl]-L-lysyl-[protein] + 4 Fe(3+) + 2 hydrogen sulfide + 2 5'-deoxyadenosine + 2 L-methionine + 2 reduced [2Fe-2S]-[ferredoxin]. It participates in protein modification; protein lipoylation via endogenous pathway; protein N(6)-(lipoyl)lysine from octanoyl-[acyl-carrier-protein]: step 2/2. Catalyzes the radical-mediated insertion of two sulfur atoms into the C-6 and C-8 positions of the octanoyl moiety bound to the lipoyl domains of lipoate-dependent enzymes, thereby converting the octanoylated domains into lipoylated derivatives. In Prochlorococcus marinus (strain SARG / CCMP1375 / SS120), this protein is Lipoyl synthase 2.